Here is a 214-residue protein sequence, read N- to C-terminus: Uracil phosphoribosyltransferase (214 aa).

Residues arginine 81, arginine 106, and 133 to 141 (DPMLATGNS) each bind 5-phospho-alpha-D-ribose 1-diphosphate. Uracil is bound by residues isoleucine 196 and 201–203 (GDA). Residue aspartate 202 participates in 5-phospho-alpha-D-ribose 1-diphosphate binding.

Belongs to the UPRTase family. It depends on Mg(2+) as a cofactor.

It carries out the reaction UMP + diphosphate = 5-phospho-alpha-D-ribose 1-diphosphate + uracil. It functions in the pathway pyrimidine metabolism; UMP biosynthesis via salvage pathway; UMP from uracil: step 1/1. With respect to regulation, allosterically activated by GTP. Functionally, catalyzes the conversion of uracil and 5-phospho-alpha-D-ribose 1-diphosphate (PRPP) to UMP and diphosphate. The polypeptide is Uracil phosphoribosyltransferase (Legionella pneumophila (strain Paris)).